Reading from the N-terminus, the 341-residue chain is Glyceraldehyde-3-phosphate dehydrogenase 2 (341 aa).

Residues 12 to 13, Arg78, and Thr120 contribute to the NAD(+) site; that span reads RI. D-glyceraldehyde 3-phosphate-binding positions include 152–154 and Thr183; that span reads SCT. The active-site Nucleophile is Cys153. Asn184 lines the NAD(+) pocket. Residues Arg198, 211–212, and Arg234 contribute to the D-glyceraldehyde 3-phosphate site; that span reads TG. Asn313 lines the NAD(+) pocket.

This sequence belongs to the glyceraldehyde-3-phosphate dehydrogenase family. As to quaternary structure, homotetramer.

Its subcellular location is the cytoplasm. It catalyses the reaction D-glyceraldehyde 3-phosphate + phosphate + NAD(+) = (2R)-3-phospho-glyceroyl phosphate + NADH + H(+). It functions in the pathway carbohydrate degradation; glycolysis; pyruvate from D-glyceraldehyde 3-phosphate: step 1/5. Its function is as follows. Catalyzes the oxidative phosphorylation of glyceraldehyde 3-phosphate (G3P) to 1,3-bisphosphoglycerate (BPG) using the cofactor NAD. The first reaction step involves the formation of a hemiacetal intermediate between G3P and a cysteine residue, and this hemiacetal intermediate is then oxidized to a thioester, with concomitant reduction of NAD to NADH. The reduced NADH is then exchanged with the second NAD, and the thioester is attacked by a nucleophilic inorganic phosphate to produce BPG. The polypeptide is Glyceraldehyde-3-phosphate dehydrogenase 2 (gapA2) (Staphylococcus epidermidis (strain ATCC 12228 / FDA PCI 1200)).